A 309-amino-acid polypeptide reads, in one-letter code: Short-chain dehydrogenase/reductase ARMGADRAFT_1048226 (309 aa).

Residues Lys-64, Asp-86, Asn-113, and Lys-145 each contribute to the NADP(+) site. The active-site Proton donor is Ser-167. NADP(+) is bound by residues Tyr-196 and Lys-200. Residue Tyr-196 is the Proton acceptor of the active site. Lys-200 (lowers pKa of active site Tyr) is an active-site residue.

The protein belongs to the short-chain dehydrogenases/reductases (SDR) family.

The protein operates within secondary metabolite biosynthesis. Functionally, short-chain dehydrogenase/reductase, part of the gene cluster that mediates the biosynthesis of melleolides, a range of antifungal and phytotoxic polyketide derivatives composed of an orsellinic acid (OA) moiety esterified to various sesquiterpene alcohols. The first step in melleolides biosynthesis is performed by the delta(6)-protoilludene synthase PRO1 which catalyzes the cyclization of farnesyl diphosphate to protoilludene. The orsellinic acid synthase armB produces OA by condensing acetyl-CoA with 3 malonyl-CoA units in a three-round chain elongation reaction folowed by a C2-C7 ring closure. ArmB further catalyzes the trans-esterification of OA to the various sesquiterpene alcohols resulting from the hydroxylation of protoilludene. The melleolides cluster also includes 5 cytochrome P450 monooxygenases, 4 NAD(+)-dependent oxidoreductases, one flavin-dependent oxidoreductase, and one O-methyltransferase. The cytochrome P450 monooxygenases may be involved in protoilludene hydroxylation to elaborate melleolides with multiple alcohol groups, such as melleolide D, which carries alcohol functionalities at C-4, C-5, C-10, and C-13. The role of the NAD(+)-dependent enzymes remains unknown. Numerous melleolides, including arnamial, show 5'-O-methylation of the aromatic moiety which may be catalyzed by the methyltransferase encoded in the cluster. The flavin-dependent oxidoreductase might represent the dehydrogenase yielding the aldehyde in position 1 of arnamial and other melleolides. Finally, several halogenase localized outside of the cluster, are able to catalyze the transfer of a single chlorine atom to the melleolide backbone, resulting in a 6'-chloromelleolide product. The chain is Short-chain dehydrogenase/reductase ARMGADRAFT_1048226 from Armillaria gallica (Bulbous honey fungus).